Here is a 502-residue protein sequence, read N- to C-terminus: MQDWRAALEEYYSRYLDSALVLAIVNDSDDSNTAREILEALSIESQCDSHEEHWDNLRRDEQELLNLKTLDEEINKIDEEDFTWELKDSSLELDPDVYNFLRSMFSDLSAARVQLVQAKCQNDLVRSSDELLNHRAIQESEQIETAADALITSNIGHRSRQRKKKTKKATNSRKPLSKFQSNTEEVNEDPILKPSLSVWENNRLLIEKLTSILNIPSSQINHEFYKNSSAWPITIRNLIHRHQPLSNITNNELMKYQEEATQLAKDTGLSLKICTDVLICSNDYKNALWILCLIKETQHNEMGNIKLSSQTAKSNSSTQTKTCLNDQSSKLVEDDEALSAEDCNRLAEEYLELRNMQYSNSAKEYRRSKSNHLFGGSAMYHAQLGREYHEKALKYRSLAMRSLAHSGTSHSLDLHGATVREAKTIVRERVAAWWAKEADTSPNSIRPFVIVTGRGNHSIGLEARLLPAIVRLLQQDHWRFDAEHGQITVYGINRHSKLNSNA.

Residues 150 to 184 (LITSNIGHRSRQRKKKTKKATNSRKPLSKFQSNTE) are disordered. Basic residues predominate over residues 157–171 (HRSRQRKKKTKKATN). One can recognise a Smr domain in the interval 411–459 (SLDLHGATVREAKTIVRERVAAWWAKEADTSPNSIRPFVIVTGRGNHSI).

Its subcellular location is the nucleus. The protein resides in the nucleolus. The polypeptide is Smr domain-containing protein C1235.03 (Schizosaccharomyces pombe (strain 972 / ATCC 24843) (Fission yeast)).